A 206-amino-acid chain; its full sequence is 2,3-bisphosphoglycerate-dependent phosphoglycerate mutase (206 aa).

Residues 9–16 (RHGQSEWN), 22–23 (TG), arginine 61, 88–91 (ERDY), lysine 99, 115–116 (RR), and 159–160 (GN) each bind substrate. The active-site Tele-phosphohistidine intermediate is histidine 10. Glutamate 88 functions as the Proton donor/acceptor in the catalytic mechanism.

This sequence belongs to the phosphoglycerate mutase family. BPG-dependent PGAM subfamily. As to quaternary structure, homodimer.

It catalyses the reaction (2R)-2-phosphoglycerate = (2R)-3-phosphoglycerate. It participates in carbohydrate degradation; glycolysis; pyruvate from D-glyceraldehyde 3-phosphate: step 3/5. In terms of biological role, catalyzes the interconversion of 2-phosphoglycerate and 3-phosphoglycerate. This Brucella melitensis biotype 2 (strain ATCC 23457) protein is 2,3-bisphosphoglycerate-dependent phosphoglycerate mutase.